Consider the following 234-residue polypeptide: LexA repressor (234 aa).

Residues 1 to 11 (MNEATSHEGPK) are compositionally biased toward basic and acidic residues. Residues 1 to 34 (MNEATSHEGPKRSLPGRPPGIRADSSGLTDRQRR) are disordered. Residues 52–72 (MREIGQAVGLSSTSSVAHQLM) constitute a DNA-binding region (H-T-H motif). Positions 83–94 (DPHRPRAYEVRG) are enriched in basic and acidic residues. The interval 83-109 (DPHRPRAYEVRGSDQSSSVQPTDTAGK) is disordered. Residues 95–105 (SDQSSSVQPTD) show a composition bias toward polar residues. Catalysis depends on for autocatalytic cleavage activity residues Ser-158 and Lys-195.

It belongs to the peptidase S24 family. Homodimer.

The catalysed reaction is Hydrolysis of Ala-|-Gly bond in repressor LexA.. In terms of biological role, represses a number of genes involved in the response to DNA damage (SOS response), including recA and lexA. In the presence of single-stranded DNA, RecA interacts with LexA causing an autocatalytic cleavage which disrupts the DNA-binding part of LexA, leading to derepression of the SOS regulon and eventually DNA repair. This is LexA repressor from Streptomyces avermitilis (strain ATCC 31267 / DSM 46492 / JCM 5070 / NBRC 14893 / NCIMB 12804 / NRRL 8165 / MA-4680).